The sequence spans 136 residues: uncharacterized protein (136 aa).

Residues 1–51 (MAANATSGRPPSIALRQPEATGWRRGIPAKVATKGTQAEREGDVRSGGRAR) are disordered. The segment covering 37-46 (QAEREGDVRS) has biased composition (basic and acidic residues).

This is an uncharacterized protein from Homo sapiens (Human).